The primary structure comprises 283 residues: Phosphatidylglycerol--prolipoprotein diacylglyceryl transferase (283 aa).

Transmembrane regions (helical) follow at residues 18 to 38, 62 to 82, 106 to 126, 136 to 156, 190 to 210, 218 to 238, and 252 to 272; these read LGGI…VVAF, YFLW…VLIY, FIGI…IASY, LLIY…FGRI, PSQL…VMWA, GLLI…AEFY, and LSMG…ILLY. Residue Arg-155 participates in a 1,2-diacyl-sn-glycero-3-phospho-(1'-sn-glycerol) binding.

The protein belongs to the Lgt family.

It localises to the cell inner membrane. It carries out the reaction L-cysteinyl-[prolipoprotein] + a 1,2-diacyl-sn-glycero-3-phospho-(1'-sn-glycerol) = an S-1,2-diacyl-sn-glyceryl-L-cysteinyl-[prolipoprotein] + sn-glycerol 1-phosphate + H(+). It participates in protein modification; lipoprotein biosynthesis (diacylglyceryl transfer). Functionally, catalyzes the transfer of the diacylglyceryl group from phosphatidylglycerol to the sulfhydryl group of the N-terminal cysteine of a prolipoprotein, the first step in the formation of mature lipoproteins. In Helicobacter pylori (strain J99 / ATCC 700824) (Campylobacter pylori J99), this protein is Phosphatidylglycerol--prolipoprotein diacylglyceryl transferase.